The chain runs to 109 residues: Biphenyl dioxygenase system ferredoxin subunit (109 aa).

The region spanning 4-100 is the Rieske domain; it reads TRVCDRRDVP…IRIEDNDVLV (97 aa). Cys-43, His-45, Cys-63, and His-66 together coordinate [2Fe-2S] cluster.

The protein belongs to the bacterial ring-hydroxylating dioxygenase ferredoxin component family. This dioxygenase system consists of four proteins: the two subunits of the hydroxylase component (BphA and BphE), a ferredoxin (BphF) and a ferredoxin reductase (BphG).

Its function is as follows. This protein seems to be a 2Fe-2S ferredoxin. This chain is Biphenyl dioxygenase system ferredoxin subunit (bphF), found in Paraburkholderia xenovorans (strain LB400).